The sequence spans 138 residues: ATP synthase epsilon chain (138 aa).

It belongs to the ATPase epsilon chain family. In terms of assembly, F-type ATPases have 2 components, CF(1) - the catalytic core - and CF(0) - the membrane proton channel. CF(1) has five subunits: alpha(3), beta(3), gamma(1), delta(1), epsilon(1). CF(0) has four main subunits: a(1), b(1), b'(1) and c(9-12).

Its subcellular location is the cellular thylakoid membrane. Produces ATP from ADP in the presence of a proton gradient across the membrane. Its function is as follows. The complex from the organism is particularly stable to disruption and remains functional after 6 hours at 55 degrees Celsius. This Thermosynechococcus vestitus (strain NIES-2133 / IAM M-273 / BP-1) protein is ATP synthase epsilon chain.